We begin with the raw amino-acid sequence, 358 residues long: Guanidino acid hydrolase, mitochondrial (358 aa).

Residues Met-1 to Gln-36 constitute a mitochondrion transit peptide. The interval Cys-31–Gln-56 is disordered. Low complexity predominate over residues His-46–Gln-56. Mn(2+) contacts are provided by Gln-168 and His-193. Lys-199 is subject to N6-acetyllysine. Lys-223 carries the post-translational modification N6-acetyllysine; alternate. The residue at position 223 (Lys-223) is an N6-succinyllysine; alternate. Mn(2+) is bound at residue Asp-284.

The protein belongs to the arginase family. Agmatinase subfamily. Mn(2+) is required as a cofactor. As to expression, detected only in liver.

The protein localises to the mitochondrion. It carries out the reaction 3-guanidinopropanoate + H2O = urea + beta-alanine. The enzyme catalyses 4-guanidinobutanoate + H2O = urea + 4-aminobutanoate. The catalysed reaction is taurocyamine + H2O = urea + taurine. It catalyses the reaction L-arginine + H2O = urea + L-ornithine. It participates in nitrogen metabolism; urea cycle; L-ornithine and urea from L-arginine: step 1/1. Functionally, hydrolyzes linear guanidino acids to form urea and the corresponding amines. Displays specificity for substrates having a negatively charged head group and short chains including taurocyamine, guanidino propanoic and butanoic acids. May protect cells by detoxifying potentially harmful amounts of guanidino acids. Metabolizes L-arginine with low efficiency. In Mus musculus (Mouse), this protein is Guanidino acid hydrolase, mitochondrial (Agmat).